The following is a 336-amino-acid chain: Holliday junction branch migration complex subunit RuvB (336 aa).

The tract at residues 4–184 is large ATPase domain (RuvB-L); it reads ADRLISAGTT…FGIVQRLEFY (181 aa). ATP contacts are provided by residues I23, R24, G65, K68, T69, T70, 131–133, R174, Y184, and R221; that span reads EDY. T69 is a binding site for Mg(2+). The small ATPAse domain (RuvB-S) stretch occupies residues 185–255; sequence QVPDLQYIVS…IAAQALDMLN (71 aa). The segment at 258–336 is head domain (RuvB-H); it reads AEGFDYMDRK…HFGITPPEMP (79 aa). Positions 294, 313, and 318 each coordinate DNA.

It belongs to the RuvB family. In terms of assembly, homohexamer. Forms an RuvA(8)-RuvB(12)-Holliday junction (HJ) complex. HJ DNA is sandwiched between 2 RuvA tetramers; dsDNA enters through RuvA and exits via RuvB. An RuvB hexamer assembles on each DNA strand where it exits the tetramer. Each RuvB hexamer is contacted by two RuvA subunits (via domain III) on 2 adjacent RuvB subunits; this complex drives branch migration. In the full resolvosome a probable DNA-RuvA(4)-RuvB(12)-RuvC(2) complex forms which resolves the HJ.

It localises to the cytoplasm. The enzyme catalyses ATP + H2O = ADP + phosphate + H(+). Functionally, the RuvA-RuvB-RuvC complex processes Holliday junction (HJ) DNA during genetic recombination and DNA repair, while the RuvA-RuvB complex plays an important role in the rescue of blocked DNA replication forks via replication fork reversal (RFR). RuvA specifically binds to HJ cruciform DNA, conferring on it an open structure. The RuvB hexamer acts as an ATP-dependent pump, pulling dsDNA into and through the RuvAB complex. RuvB forms 2 homohexamers on either side of HJ DNA bound by 1 or 2 RuvA tetramers; 4 subunits per hexamer contact DNA at a time. Coordinated motions by a converter formed by DNA-disengaged RuvB subunits stimulates ATP hydrolysis and nucleotide exchange. Immobilization of the converter enables RuvB to convert the ATP-contained energy into a lever motion, pulling 2 nucleotides of DNA out of the RuvA tetramer per ATP hydrolyzed, thus driving DNA branch migration. The RuvB motors rotate together with the DNA substrate, which together with the progressing nucleotide cycle form the mechanistic basis for DNA recombination by continuous HJ branch migration. Branch migration allows RuvC to scan DNA until it finds its consensus sequence, where it cleaves and resolves cruciform DNA. The sequence is that of Holliday junction branch migration complex subunit RuvB from Shigella sonnei (strain Ss046).